A 79-amino-acid chain; its full sequence is Putative defensin-like protein 146 (79 aa).

A signal peptide spans 1-25; the sequence is MMKNQFQLSLIILTFFILLELGVMG. 4 disulfides stabilise this stretch: C35/C78, C46/C66, C51/C72, and C55/C74.

This sequence belongs to the DEFL family.

The protein localises to the secreted. This Arabidopsis thaliana (Mouse-ear cress) protein is Putative defensin-like protein 146 (LCR9).